We begin with the raw amino-acid sequence, 443 residues long: Probable ribonuclease FAU-1 (443 aa).

This sequence belongs to the FAU-1 family.

In terms of biological role, probable RNase involved in rRNA stability through maturation and/or degradation of precursor rRNAs. Binds to RNA in loop regions with AU-rich sequences. This Pyrobaculum aerophilum (strain ATCC 51768 / DSM 7523 / JCM 9630 / CIP 104966 / NBRC 100827 / IM2) protein is Probable ribonuclease FAU-1.